We begin with the raw amino-acid sequence, 365 residues long: tRNA N6-adenosine threonylcarbamoyltransferase (365 aa).

2 residues coordinate Fe cation: His-119 and His-123. Substrate-binding positions include 141-145 (LVSGG), Asp-174, Gly-187, and Asn-288. Asp-316 is a Fe cation binding site.

The protein belongs to the KAE1 / TsaD family. It depends on Fe(2+) as a cofactor.

The protein resides in the cytoplasm. It catalyses the reaction L-threonylcarbamoyladenylate + adenosine(37) in tRNA = N(6)-L-threonylcarbamoyladenosine(37) in tRNA + AMP + H(+). Required for the formation of a threonylcarbamoyl group on adenosine at position 37 (t(6)A37) in tRNAs that read codons beginning with adenine. Is involved in the transfer of the threonylcarbamoyl moiety of threonylcarbamoyl-AMP (TC-AMP) to the N6 group of A37, together with TsaE and TsaB. TsaD likely plays a direct catalytic role in this reaction. The protein is tRNA N6-adenosine threonylcarbamoyltransferase of Rhizobium etli (strain ATCC 51251 / DSM 11541 / JCM 21823 / NBRC 15573 / CFN 42).